A 429-amino-acid polypeptide reads, in one-letter code: Enolase (429 aa).

Q164 contacts (2R)-2-phosphoglycerate. The active-site Proton donor is the E206. Mg(2+) contacts are provided by D243, E286, and D313. (2R)-2-phosphoglycerate is bound by residues K338, R367, S368, and K389. Residue K338 is the Proton acceptor of the active site.

This sequence belongs to the enolase family. As to quaternary structure, homooctamer. Forms a ring-shaped particle. The cofactor is Mg(2+).

The protein resides in the cytoplasm. It localises to the secreted. Its subcellular location is the cell surface. It catalyses the reaction (2R)-2-phosphoglycerate = phosphoenolpyruvate + H2O. Its pathway is carbohydrate degradation; glycolysis; pyruvate from D-glyceraldehyde 3-phosphate: step 4/5. Its activity is regulated as follows. Inhibited by fluoride and phosphate. Functionally, catalyzes the reversible conversion of 2-phosphoglycerate (2-PG) into phosphoenolpyruvate (PEP). It is essential for the degradation of carbohydrates via glycolysis. In Thermotoga maritima (strain ATCC 43589 / DSM 3109 / JCM 10099 / NBRC 100826 / MSB8), this protein is Enolase.